A 395-amino-acid chain; its full sequence is ATP phosphoribosyltransferase regulatory subunit (395 aa).

This sequence belongs to the class-II aminoacyl-tRNA synthetase family. HisZ subfamily. In terms of assembly, heteromultimer composed of HisG and HisZ subunits.

Its subcellular location is the cytoplasm. It participates in amino-acid biosynthesis; L-histidine biosynthesis; L-histidine from 5-phospho-alpha-D-ribose 1-diphosphate: step 1/9. In terms of biological role, required for the first step of histidine biosynthesis. May allow the feedback regulation of ATP phosphoribosyltransferase activity by histidine. This chain is ATP phosphoribosyltransferase regulatory subunit, found in Ectopseudomonas mendocina (strain ymp) (Pseudomonas mendocina).